We begin with the raw amino-acid sequence, 282 residues long: Probable iron transport system membrane protein HI_0360 (282 aa).

The next 8 helical transmembrane spans lie at 17–37, 63–83, 93–113, 140–160, 164–184, 186–206, 223–243, and 245–265; these read AMIL…YLML, LPYA…ILWI, AVIG…VSLN, IIIG…LLIF, TQAI…FTLL, ACVV…MVVT, IIAI…SYYL, and GATG…AFLF.

It belongs to the ABC-3 integral membrane protein family.

The protein resides in the cell inner membrane. In terms of biological role, part of an ATP-driven transport system HI_0359/HI_0360/HI_0361/HI_0362 for iron. The protein is Probable iron transport system membrane protein HI_0360 of Haemophilus influenzae (strain ATCC 51907 / DSM 11121 / KW20 / Rd).